Consider the following 852-residue polypeptide: Potassium voltage-gated channel subfamily KQT member 2 (852 aa).

The Cytoplasmic portion of the chain corresponds to 1-90; sequence MVQKSRNGGV…LYNVLERPRG (90 aa). Serine 52 bears the Phosphoserine; by PKA mark. Residues 91 to 113 form a helical membrane-spanning segment; that stretch reads WAFIYHAYVFLLVFSCLVLSVFS. At 114 to 123 the chain is on the extracellular side; the sequence is TIKEYEKSSE. A helical transmembrane segment spans residues 124–145; that stretch reads GALYILEIVTIVVFGVEYFVRI. Over 146-163 the chain is Cytoplasmic; the sequence is WAAGCCCRYRGWRGRLKF. A helical membrane pass occupies residues 164-183; it reads ARKPFCVIDIMVLIASIAVL. Topologically, residues 184-196 are extracellular; it reads AAGSQGNVFATSA. The helical; Voltage-sensor transmembrane segment at 197 to 215 threads the bilayer; it reads LRSLRFLQILRMIRMDRRG. A 1,2-diacyl-sn-glycero-3-phospho-(1D-myo-inositol-4,5-bisphosphate) is bound at residue arginine 214. Residues 216 to 227 are Cytoplasmic-facing; that stretch reads GTWKLLGSVVYA. Positions 222–323 are mediates interaction with SLC5A3; it reads GSVVYAHSKE…SGFALKVQEQ (102 aa). Residues 228–253 traverse the membrane as a helical segment; that stretch reads HSKELVTAWYIGFLCLILASFLVYLA. Lysine 230 contacts a 1,2-diacyl-sn-glycero-3-phospho-(1D-myo-inositol-4,5-bisphosphate). Residues 254–263 are Extracellular-facing; sequence EKGENDHFDT. The pore-forming intramembrane region spans 264 to 276; that stretch reads YADALWWGLITLT. The Selectivity filter signature appears at 277 to 282; it reads TIGYGD. The Extracellular segment spans residues 277–287; that stretch reads TIGYGDKYPQT. A helical transmembrane segment spans residues 288 to 314; that stretch reads WNGRLLAATFTLIGVSFFALPAGILGS. Over 315 to 852 the chain is Cytoplasmic; that stretch reads GFALKVQEQH…GDVAWAGPRK (538 aa). Positions 317–522 are mediates interaction with calmodulin; the sequence is ALKVQEQHRQ…EDLTPGLKVS (206 aa). Lysine 327 is a binding site for a 1,2-diacyl-sn-glycero-3-phospho-(1D-myo-inositol-4,5-bisphosphate). Residues 404 to 469 are disordered; it reads TFRKEPQPEP…SKVPKSWSFG (66 aa). The span at 440–457 shows a compositional bias: polar residues; sequence PQAQTVRRSPSADQSLDD. Serine 448, serine 450, serine 454, serine 458, serine 460, and serine 489 each carry phosphoserine. Disordered regions lie at residues 579–601, 643–662, and 672–718; these read GPTI…EDPS, GAKE…SRDH, and IVRS…DHGS. Positions 583-592 are enriched in basic and acidic residues; the sequence is TDKDRTKGPA. At serine 655 the chain carries Phosphoserine. Phosphoserine is present on residues serine 781 and serine 783. The disordered stretch occupies residues 818-852; sequence ESDTDSDLCTPCGPPPRSATGEGPFGDVAWAGPRK.

It belongs to the potassium channel family. KQT (TC 1.A.1.15) subfamily. Kv7.2/KCNQ2 sub-subfamily. Heterotetramer with KCNQ3; forms heterotetrameric M-channel responsible for the M-current. Homotetrameric; forms a functional homotetrameric channel resulting in the expression of a small M-current. Interacts with calmodulin; the interaction is calcium-independent, constitutive and participates in the proper assembly of a functional M-channel. May associate with KCNE2. Interacts with IQCJ-SCHIP1. Interacts (via the pore module) with SLC5A3/SMIT1; forms a coregulatory complex that alters ion selectivity, voltage dependence and gating kinetics of the channel. Interacts with AKAP5; the interaction may help KCNQ2 channel complex to retain calcium-bound calmodulin. KCNQ2/KCNQ3 heteromeric current can be increased by intracellular cyclic AMP, an effect that depends on phosphorylation of Ser-52 in the N-terminal region. Post-translationally, KCNQ2/KCNQ3 are ubiquitinated by NEDD4L. Ubiquitination leads to protein degradation. Degradation induced by NEDD4L is inhibited by USP36. Expressed in brain and sympathetic ganglia. In brain, expressed in cortex, hippocampus, and cerebellum. In sympathetic ganglia, expressed at lower levels in celiac ganglia and superior mesenteric ganglia than in superior cervical ganglia.

It is found in the cell membrane. It catalyses the reaction K(+)(in) = K(+)(out). It carries out the reaction Rb(+)(in) = Rb(+)(out). The catalysed reaction is Cs(+)(in) = Cs(+)(out). The enzyme catalyses Na(+)(in) = Na(+)(out). Phosphatidylinositol-4,5-bisphosphate (PIP2) potentiates the activation of KCNQ channels by enhancing the electro-mechanical coupling of the voltage-sensing domain (VSD) and the pore-forming domain (PD). In the closed state of the channel, PIP2 is anchored at the S2-S3 loop; upon channel activation, PIP2 interacts with the S4-S5 linker and is involved in channel gating. Calcium suppresses KCNQ2 and KCNQ2-KCNQ3 channel currents, with calcium-bound calmodulin inducing a change in channel configuration which leads to the reduction of channel affinity for PIP2 and subsequent current suppression. Its function is as follows. Pore-forming subunit of the voltage-gated potassium (Kv) M-channel which is responsible for the M-current, a key controller of neuronal excitability. M-channel is composed of pore-forming subunits KCNQ2 and KCNQ3 assembled as heterotetramers. The native M-current has a slowly activating and deactivating potassium conductance which plays a critical role in determining the subthreshold electrical excitability of neurons as well as the responsiveness to synaptic inputs. M-channel is selectively permeable in vitro to other cations besides potassium, in decreasing order of affinity K(+) &gt; Rb(+) &gt; Cs(+) &gt; Na(+). M-channel association with SLC5A3/SMIT1 alters channel ion selectivity, increasing Na(+) and Cs(+) permeation relative to K(+). Suppressed by activation of the muscarinic acetylcholine receptor CHRM1. This is Potassium voltage-gated channel subfamily KQT member 2 from Rattus norvegicus (Rat).